A 148-amino-acid chain; its full sequence is Calmodulin-related protein 97A (148 aa).

EF-hand domains follow at residues 7 to 42 (EQIAEFKDAFVQFDKEGTGKIATRELGTLMRTLGQN), 43 to 78 (PTEAELQDLIAEAENNNNGQLNFTEFCGIMAKQMRE), 80 to 115 (DTEEEMREAFKIFDRDGDGFISPAELRFVMINLGEK), and 116 to 148 (VTDEEIDEMIREADFDGDGMINYEEFVWMISQK). Residues Asp-20, Thr-24, Lys-26, Glu-31, Asn-58, Asn-60, Gln-62, Glu-67, Asp-93, Asp-95, Asp-97, Glu-104, Asp-129, Asp-131, Asp-133, Met-135, and Glu-140 each coordinate Ca(2+).

Belongs to the calmodulin family.

May be involved in calcium-mediated signal transduction. This chain is Calmodulin-related protein 97A (Acam), found in Drosophila melanogaster (Fruit fly).